The chain runs to 427 residues: MYDFIANLRWRGMIHDITPGLEAQLQKEMITGYIGFDPTAPSLHVGNLATIMLLKHFQLAGHKPIAVVGGATGMIGDPSFKSTERKFLSEEELLHNQSCIMKQLKCFLDFSSSANTAELLNNIDWFKDFGFLRFLREVGKHISINYMMAKESVKRRLEDGISFTEFSYQLLQGYDFYYLYNTKGVKLQMGGADQWGNLTTGIELIRRKTGEEAFALTAPLITKADGTKFGKSEQGNIWLDSTMTSPYEFYQFWLNCTDEDACRLIKVFTLLSKEEIDNLIELHVQAPHQRILQKQIAKELTIRVHSETDYMQARKTSELLFGHATAEDLWELSEKDFKVIFKSIPEVHITLTQLTEAEHMLDLVASTGFGIMFNSKGEVRRAIQEGSLSVNKEKITDPLQKPNLKLLQDKYLLVQRGKKHHYLIKVS.

Residue Tyr33 coordinates L-tyrosine. The 'HIGH' region signature appears at Pro38 to Asn47. Tyr168 and Gln172 together coordinate L-tyrosine. The short motif at Lys228 to Ser232 is the 'KMSKS' region element. Residue Lys231 coordinates ATP. One can recognise an S4 RNA-binding domain in the interval Glu358–Val426.

The protein belongs to the class-I aminoacyl-tRNA synthetase family. TyrS type 1 subfamily. In terms of assembly, homodimer.

It localises to the cytoplasm. The enzyme catalyses tRNA(Tyr) + L-tyrosine + ATP = L-tyrosyl-tRNA(Tyr) + AMP + diphosphate + H(+). Functionally, catalyzes the attachment of tyrosine to tRNA(Tyr) in a two-step reaction: tyrosine is first activated by ATP to form Tyr-AMP and then transferred to the acceptor end of tRNA(Tyr). This chain is Tyrosine--tRNA ligase, found in Amoebophilus asiaticus (strain 5a2).